The chain runs to 89 residues: Cell division topological specificity factor (89 aa).

The protein belongs to the MinE family.

Functionally, prevents the cell division inhibition by proteins MinC and MinD at internal division sites while permitting inhibition at polar sites. This ensures cell division at the proper site by restricting the formation of a division septum at the midpoint of the long axis of the cell. In Heliobacterium modesticaldum (strain ATCC 51547 / Ice1), this protein is Cell division topological specificity factor.